The chain runs to 198 residues: 3-isopropylmalate dehydratase small subunit (198 aa).

Belongs to the LeuD family. LeuD type 1 subfamily. In terms of assembly, heterodimer of LeuC and LeuD.

It carries out the reaction (2R,3S)-3-isopropylmalate = (2S)-2-isopropylmalate. It functions in the pathway amino-acid biosynthesis; L-leucine biosynthesis; L-leucine from 3-methyl-2-oxobutanoate: step 2/4. Functionally, catalyzes the isomerization between 2-isopropylmalate and 3-isopropylmalate, via the formation of 2-isopropylmaleate. The polypeptide is 3-isopropylmalate dehydratase small subunit (Mycobacterium marinum (strain ATCC BAA-535 / M)).